A 510-amino-acid chain; its full sequence is Chorion transcription factor Cf2 (510 aa).

The span at 1-10 shows a compositional bias: polar residues; it reads MIKSTTNPQE. Residues 1-40 form a disordered region; it reads MIKSTTNPQEQRLPRPEDQSPAPPPPPPSSATTSTAAPAT. Positions 30 to 40 are enriched in low complexity; that stretch reads SATTSTAAPAT. 2 consecutive C2H2-type zinc fingers follow at residues 74-97 and 125-148; these read HYCP…QLCH and HPCF…RLAH. Residues 222-237 show a composition bias toward basic and acidic residues; it reads PEEQHHQQQLQAEHHH. The tract at residues 222–279 is disordered; it reads PEEQHHQQQLQAEHHHQQQHQQQQQQQQQQQELLEQQQREMQEQAQQQQVHHHQQDQD. The span at 240–257 shows a compositional bias: low complexity; it reads QHQQQQQQQQQQQELLEQ. C2H2-type zinc fingers lie at residues 366–388, 401–423, 429–451, 457–479, and 485–508; these read HKCP…RKIH, YTCS…TRIH, FRCG…LTTH, FHCG…IRTH, and YTCP…TKLH.

As to expression, isoform I is found in embryos, pupae and adult somatic tissue; isoform II occurs in embryos, pupae, ovaries, testis and to a lesser extent in adult somatic tissue.

It localises to the nucleus. In terms of biological role, transcriptional regulator; binds to the promoter region of Cp15. Also binds to its own promoter, thus having a probable autoregulatory role. In Drosophila melanogaster (Fruit fly), this protein is Chorion transcription factor Cf2 (Cf2).